The chain runs to 453 residues: Gamma-aminobutyric acid receptor subunit alpha-6 (453 aa).

The N-terminal stretch at 1 to 19 is a signal peptide; that stretch reads MVLLLPWLFIILWLENAQA. Over 20-243 the chain is Extracellular; that stretch reads QLEDEGNFYS…FHLQRKMGYF (224 aa). N-linked (GlcNAc...) asparagine glycosylation occurs at Asn-31. 4-aminobutanoate is bound at residue Arg-84. N-linked (GlcNAc...) asparagine glycans are attached at residues Asn-128 and Asn-141. Thr-147 lines the 4-aminobutanoate pocket. A disulfide bridge connects residues Cys-156 and Cys-170. The helical transmembrane segment at 244 to 264 threads the bilayer; it reads MIQIYTPCIMTVILSQVSFWI. At 265–270 the chain is on the cytoplasmic side; it reads NKESVP. The chain crosses the membrane as a helical span at residues 271–290; the sequence is ARTVFGITTVLTMTTLSISA. Residues 291–304 are Extracellular-facing; that stretch reads RHSLPKVSYATAMD. Residues 305 to 325 traverse the membrane as a helical segment; that stretch reads WFIAVCFAFVFSALIEFAAVN. The Cytoplasmic portion of the chain corresponds to 326 to 422; sequence YFTNLQSQKA…GTSKIDQYSR (97 aa). At Ser-375 the chain carries Phosphoserine. Residues 423 to 443 form a helical membrane-spanning segment; it reads ILFPVAFAGFNLVYWIVYLSK. Residues 444-453 are Extracellular-facing; sequence DTMEVSSTVE.

Belongs to the ligand-gated ion channel (TC 1.A.9) family. Gamma-aminobutyric acid receptor (TC 1.A.9.5) subfamily. GABRA6 sub-subfamily. In terms of assembly, heteropentamer, formed by a combination of alpha (GABRA1-6), beta (GABRB1-3), gamma (GABRG1-3), delta (GABRD), epsilon (GABRE), rho (GABRR1-3), pi (GABRP) and theta (GABRQ) chains, each subunit exhibiting distinct physiological and pharmacological properties. Binds UBQLN1. As to expression, expressed in brain, in cerebellar granule cells.

It is found in the postsynaptic cell membrane. The protein resides in the cell membrane. The catalysed reaction is chloride(in) = chloride(out). Its function is as follows. Alpha subunit of the heteropentameric ligand-gated chloride channel gated by gamma-aminobutyric acid (GABA), a major inhibitory neurotransmitter in the brain. GABA-gated chloride channels, also named GABA(A) receptors (GABAAR), consist of five subunits arranged around a central pore and contain GABA active binding site(s) located at the alpha and beta subunit interface(s). When activated by GABA, GABAARs selectively allow the flow of chloride anions across the cell membrane down their electrochemical gradient. Alpha-6/GABRA6 subunits are found at both synaptic and extrasynaptic sites. Chloride influx into the postsynaptic neuron following GABAAR opening decreases the neuron ability to generate a new action potential, thereby reducing nerve transmission. Extrasynaptic alpha-6-containing receptors contribute to the tonic GABAergic inhibition. Alpha-6 subunits are also present on glutamatergic synapses. The protein is Gamma-aminobutyric acid receptor subunit alpha-6 of Mus musculus (Mouse).